Here is a 316-residue protein sequence, read N- to C-terminus: Endochitinase WIN8 (316 aa).

The signal sequence occupies residues 1–23 (MRFWALTVLSLLLSLLLGVSSDT). The region spanning 24-64 (AQCGSQAGNATCPNDLCCSSGGYCGLTVAYCCAGCVSQCRN) is the Chitin-binding type-1 domain. 7 cysteine pairs are disulfide-bonded: Cys-26/Cys-41, Cys-35/Cys-47, Cys-40/Cys-54, Cys-58/Cys-62, Cys-84/Cys-146, Cys-158/Cys-168, and Cys-266/Cys-298. The active-site Proton donor is the Glu-128.

It belongs to the glycosyl hydrolase 19 family. Chitinase class I subfamily.

The catalysed reaction is Random endo-hydrolysis of N-acetyl-beta-D-glucosaminide (1-&gt;4)-beta-linkages in chitin and chitodextrins.. Defense against chitin-containing fungal pathogens. The sequence is that of Endochitinase WIN8 (WIN8) from Populus trichocarpa (Western balsam poplar).